Consider the following 170-residue polypeptide: Adenine phosphoribosyltransferase (170 aa).

This sequence belongs to the purine/pyrimidine phosphoribosyltransferase family. As to quaternary structure, homodimer.

It localises to the cytoplasm. The enzyme catalyses AMP + diphosphate = 5-phospho-alpha-D-ribose 1-diphosphate + adenine. The protein operates within purine metabolism; AMP biosynthesis via salvage pathway; AMP from adenine: step 1/1. In terms of biological role, catalyzes a salvage reaction resulting in the formation of AMP, that is energically less costly than de novo synthesis. This is Adenine phosphoribosyltransferase from Prochlorococcus marinus (strain MIT 9312).